The following is a 701-amino-acid chain: Putative pectinesterase/pectinesterase inhibitor 43 (701 aa).

The signal sequence occupies residues 1–22 (MNKYVLLGVTALIMAMVICVEA). The segment at 42-195 (MITKTTVSII…QHLTSNGLAI (154 aa)) is pectinesterase inhibitor 43. 2 stretches are compositionally biased toward low complexity: residues 221 to 256 (GILGSGSSRDESVGSSQDSPPNEDSSDDSPSTVDSS) and 263 to 275 (SSSENQSSDSSNN). Positions 221–351 (GILGSGSSRD…DPLRKLNPLN (131 aa)) are disordered. Residue asparagine 267 is glycosylated (N-linked (GlcNAc...) asparagine). Composition is skewed to polar residues over residues 276 to 287 (RPLDSSKNQQME) and 313 to 338 (QKSTSSENQPLDSSENPPQKSTSSEN). The interval 391 to 688 (NVVVAKDGSG…FAPGNFLRGN (298 aa)) is pectinesterase 43. Residues threonine 467 and glutamine 497 each contribute to the substrate site. Residue aspartate 520 is the Proton donor; for pectinesterase activity of the active site. An intrachain disulfide couples cysteine 534 to cysteine 554. Aspartate 541 functions as the Nucleophile; for pectinesterase activity in the catalytic mechanism. Substrate is bound by residues arginine 609 and tryptophan 611. Asparagine 637 is a glycosylation site (N-linked (GlcNAc...) asparagine).

In the N-terminal section; belongs to the PMEI family. This sequence in the C-terminal section; belongs to the pectinesterase family. As to expression, expressed in flower buds.

The protein localises to the secreted. It is found in the cell wall. The catalysed reaction is [(1-&gt;4)-alpha-D-galacturonosyl methyl ester](n) + n H2O = [(1-&gt;4)-alpha-D-galacturonosyl](n) + n methanol + n H(+). It functions in the pathway glycan metabolism; pectin degradation; 2-dehydro-3-deoxy-D-gluconate from pectin: step 1/5. Acts in the modification of cell walls via demethylesterification of cell wall pectin. The chain is Putative pectinesterase/pectinesterase inhibitor 43 (PME43) from Arabidopsis thaliana (Mouse-ear cress).